The sequence spans 69 residues: U2-agatoxin-Ao1z (69 aa).

A signal peptide spans 1-20; sequence MRAIISLLLISAMVFSMIEA. Positions 21 to 34 are excised as a propeptide; that stretch reads VPVEEGLQLFEGER. Cystine bridges form between C37-C53, C44-C58, and C52-C68.

This sequence belongs to the neurotoxin 01 (U2-agtx) family. As to expression, expressed by the venom gland.

It is found in the secreted. In terms of biological role, insect active toxin causing rapid but reversible paralysis in crickets. No activity shown in mammals. Does not show effect on mammalian voltage-gated calcium channels. The chain is U2-agatoxin-Ao1z from Agelena orientalis (Funnel-web spider).